Here is a 333-residue protein sequence, read N- to C-terminus: GTP 3',8-cyclase (333 aa).

The Radical SAM core domain maps to 7 to 221; it reads KFGRVHDYIR…FEACNEAGYE (215 aa). Arg-16 contacts GTP. [4Fe-4S] cluster-binding residues include Cys-23 and Cys-27. Residue Tyr-29 coordinates S-adenosyl-L-methionine. Cys-30 is a binding site for [4Fe-4S] cluster. Position 66 (Arg-66) interacts with GTP. S-adenosyl-L-methionine is bound at residue Gly-70. Residue Thr-97 participates in GTP binding. Ser-121 lines the S-adenosyl-L-methionine pocket. Lys-158 contributes to the GTP binding site. An S-adenosyl-L-methionine-binding site is contributed by Met-192. [4Fe-4S] cluster contacts are provided by Cys-257 and Cys-260. GTP is bound at residue 262–264; sequence RLR. Cys-274 provides a ligand contact to [4Fe-4S] cluster.

It belongs to the radical SAM superfamily. MoaA family. As to quaternary structure, monomer and homodimer. Requires [4Fe-4S] cluster as cofactor.

It catalyses the reaction GTP + AH2 + S-adenosyl-L-methionine = (8S)-3',8-cyclo-7,8-dihydroguanosine 5'-triphosphate + 5'-deoxyadenosine + L-methionine + A + H(+). The protein operates within cofactor biosynthesis; molybdopterin biosynthesis. Catalyzes the cyclization of GTP to (8S)-3',8-cyclo-7,8-dihydroguanosine 5'-triphosphate. The polypeptide is GTP 3',8-cyclase (Listeria monocytogenes serotype 4b (strain CLIP80459)).